The primary structure comprises 395 residues: Altered inheritance of mitochondria protein 39, mitochondrial (395 aa).

Residues 156–176 (QIWSAIFGGIFGVILGYSLIY) form a helical membrane-spanning segment.

Belongs to the AIM39 family.

It is found in the mitochondrion membrane. The chain is Altered inheritance of mitochondria protein 39, mitochondrial (AIM39) from Saccharomyces cerevisiae (strain ATCC 204508 / S288c) (Baker's yeast).